Reading from the N-terminus, the 318-residue chain is Nuclear egress protein 1 (318 aa).

The segment at 129–239 (CLRLSPFGHS…HLLLQGTSLH (111 aa)) adopts a CCCH-type zinc-finger fold.

The protein belongs to the herpesviridae NEC1 protein family. Forms a heterodimeric viral nuclear egress complex (NEC) with NEC2. Interacts with capsid vertex specific component 2/CVC2; this interaction directs the capsid to the host inner nuclear membrane to initiate budding. In terms of processing, phosphorylated at serine residues in the N-terminus. This phosphorylation regulates the localization within the inner nuclear membrane.

The protein resides in the host nucleus inner membrane. In terms of biological role, plays an essential role in virion nuclear egress, the first step of virion release from infected cell. Within the host nucleus, NEC1 interacts with the newly formed capsid through the vertexes and directs it to the inner nuclear membrane by associating with NEC2. Induces the budding of the capsid at the inner nuclear membrane as well as its envelopment into the perinuclear space. There, the NEC1/NEC2 complex promotes the fusion of the enveloped capsid with the outer nuclear membrane and the subsequent release of the viral capsid into the cytoplasm where it will reach the secondary budding sites in the host Golgi or trans-Golgi network. In Homo sapiens (Human), this protein is Nuclear egress protein 1.